We begin with the raw amino-acid sequence, 75 residues long: GCFEDWSRCSPSTASATGVLWRSCDSYCKVCFKADRGECYDSPSLNCPHRLPNNKQCRCINARTAKDNRNPTCWA.

5 disulfide bridges follow: Cys-2–Cys-9, Cys-24–Cys-28, Cys-31–Cys-73, Cys-39–Cys-47, and Cys-57–Cys-59.

It belongs to the macin family.

It is found in the secreted. Has a bactericial activity. In Hirudo medicinalis (Medicinal leech), this protein is Theromacin.